A 454-amino-acid chain; its full sequence is Probable DNA primase large subunit (454 aa).

[4Fe-4S] cluster contacts are provided by Cys280, Cys359, Cys375, and Cys415.

The protein belongs to the eukaryotic-type primase large subunit family. Heterodimer of a small subunit and a large subunit. [4Fe-4S] cluster is required as a cofactor.

Its function is as follows. DNA primase is the polymerase that synthesizes small RNA primers for the Okazaki fragments made during discontinuous DNA replication. In Arabidopsis thaliana (Mouse-ear cress), this protein is Probable DNA primase large subunit.